A 415-amino-acid chain; its full sequence is Protein fuzzy homolog (415 aa).

Belongs to the fuzzy family. As to quaternary structure, component of the CPLANE (ciliogenesis and planar polarity effectors) complex, composed of INTU, FUZ and WDPCP. Interacts with CPLANE1 and CPLANE2.

Its subcellular location is the cytoplasm. The protein resides in the cytoskeleton. It is found in the cilium basal body. Functionally, probable planar cell polarity effector involved in cilium biogenesis. Proposed to function as core component of the CPLANE (ciliogenesis and planar polarity effectors) complex involved in the recruitment of peripheral IFT-A proteins to basal bodies. May regulate protein and membrane transport to the cilium. May regulate the morphogenesis of hair follicles which depends on functional primary cilia. Binds phosphatidylinositol 3-phosphate with highest affinity, followed by phosphatidylinositol 4-phosphate and phosphatidylinositol 5-phosphate. The chain is Protein fuzzy homolog (Fuz) from Rattus norvegicus (Rat).